Reading from the N-terminus, the 284-residue chain is Bifunctional protein FolD (284 aa).

NADP(+) contacts are provided by residues 166–168 and Ile232; that span reads GAS.

It belongs to the tetrahydrofolate dehydrogenase/cyclohydrolase family. Homodimer.

The enzyme catalyses (6R)-5,10-methylene-5,6,7,8-tetrahydrofolate + NADP(+) = (6R)-5,10-methenyltetrahydrofolate + NADPH. The catalysed reaction is (6R)-5,10-methenyltetrahydrofolate + H2O = (6R)-10-formyltetrahydrofolate + H(+). The protein operates within one-carbon metabolism; tetrahydrofolate interconversion. In terms of biological role, catalyzes the oxidation of 5,10-methylenetetrahydrofolate to 5,10-methenyltetrahydrofolate and then the hydrolysis of 5,10-methenyltetrahydrofolate to 10-formyltetrahydrofolate. This Shewanella sediminis (strain HAW-EB3) protein is Bifunctional protein FolD.